The sequence spans 281 residues: Leukocyte antigen CD37 (281 aa).

Residues 1–17 lie on the Cytoplasmic side of the membrane; the sequence is MSAQESCLSLIKYFLFV. Residues 18–38 traverse the membrane as a helical segment; that stretch reads FNLFFFVLGGLIFCFGTWILI. At 39–59 the chain is on the extracellular side; it reads DKTSFVSFVGLSFVPLQTWSK. The chain crosses the membrane as a helical span at residues 60-74; that stretch reads VLSVSGVLTMALALL. Residues 75 to 85 are Cytoplasmic-facing; the sequence is GCVGALKELRC. A helical transmembrane segment spans residues 86–111; the sequence is LLGLYFGMLLLLFATQITLGILISTQ. Topologically, residues 112 to 241 are extracellular; it reads RVRLERRVQE…RSLQKWLHNN (130 aa). N-linked (GlcNAc...) asparagine glycans are attached at residues asparagine 170, asparagine 183, and asparagine 188. The helical transmembrane segment at 242–266 threads the bilayer; sequence IISIVGICLGVGLLELGFMTLSIFL. Residues 267–281 are Cytoplasmic-facing; the sequence is CRNLDHVYDRLARYR.

This sequence belongs to the tetraspanin (TM4SF) family. In terms of assembly, interacts with SCIMP. Interacts with SOCS3. Interacts with DECTIN1/CLEC7A. In terms of processing, tyrosine phosphorylated; leading to activation of downstream signaling pathways. As to expression, B-lymphocytes.

It is found in the cell membrane. Functionally, structural component of specialized membrane microdomains known as tetraspanin-enriched microdomains (TERMs), which act as platforms for receptor clustering and signaling. Participates thereby in diverse biological functions such as cell signal transduction, adhesion, migration and protein trafficking. Upon ligand binding, two signaling pathways are activated, one acting through phosphorylation by LYN leading to cell death or a survival pathway with activation of GSK3B. Plays an essential role essential for clustering of integrin ITGA4/ITGB1 and promotes its mobility in the plasma membrane of B-cells. In turn, participates in ITGA4/ITGB1 integrin-mediated antiapoptotic signaling through AKT. Plays also a role in the migration of dendritic cells and neutrophils to draining lymph nodes, as well as in their integrin-mediated adhesion. Negatively regulates IL-6 responses through direct interaction with SOCS3 thereby preventing constitutive IL-6 signaling. Alternatively, inhibition of IL-6 signaling can also occur via interaction and stabilization of DECTIN1/CLEC7A at the cell membrane to inhibit its ability to promote the production of IL-6. The sequence is that of Leukocyte antigen CD37 (Cd37) from Rattus norvegicus (Rat).